A 439-amino-acid polypeptide reads, in one-letter code: GTPase Obg (439 aa).

An Obg domain is found at 1–159 (MAFVDQAEIE…RKLKLELKVL (159 aa)). An OBG-type G domain is found at 160-336 (ADVGLVGFPS…LMRLTADLLA (177 aa)). Residues 166-173 (GFPSAGKS), 191-195 (FTTLS), 213-216 (DLPG), 283-286 (TKMD), and 317-319 (SAL) each bind GTP. Mg(2+) is bound by residues serine 173 and threonine 193. The OCT domain occupies 358-439 (DFKPEQHNFT…NSDFVFEFSD (82 aa)).

The protein belongs to the TRAFAC class OBG-HflX-like GTPase superfamily. OBG GTPase family. As to quaternary structure, monomer. Mg(2+) is required as a cofactor.

It is found in the cytoplasm. Functionally, an essential GTPase which binds GTP, GDP and possibly (p)ppGpp with moderate affinity, with high nucleotide exchange rates and a fairly low GTP hydrolysis rate. Plays a role in control of the cell cycle, stress response, ribosome biogenesis and in those bacteria that undergo differentiation, in morphogenesis control. In Leuconostoc citreum (strain KM20), this protein is GTPase Obg.